We begin with the raw amino-acid sequence, 456 residues long: L-seryl-tRNA(Sec) selenium transferase (456 aa).

Lys-288 bears the N6-(pyridoxal phosphate)lysine mark.

The protein belongs to the SelA family. Pyridoxal 5'-phosphate is required as a cofactor.

Its subcellular location is the cytoplasm. The enzyme catalyses L-seryl-tRNA(Sec) + selenophosphate + H(+) = L-selenocysteinyl-tRNA(Sec) + phosphate. It functions in the pathway aminoacyl-tRNA biosynthesis; selenocysteinyl-tRNA(Sec) biosynthesis; selenocysteinyl-tRNA(Sec) from L-seryl-tRNA(Sec) (bacterial route): step 1/1. In terms of biological role, converts seryl-tRNA(Sec) to selenocysteinyl-tRNA(Sec) required for selenoprotein biosynthesis. The sequence is that of L-seryl-tRNA(Sec) selenium transferase from Helicobacter hepaticus (strain ATCC 51449 / 3B1).